A 209-amino-acid polypeptide reads, in one-letter code: Small ribosomal subunit protein uS4 (209 aa).

The disordered stretch occupies residues 22-45 (RGRNPLLRKPNPPGQHGMQRKKKS). The S4 RNA-binding domain occupies 93-154 (CRLDNIVYRL…KSRRLAIVTE (62 aa)).

It belongs to the universal ribosomal protein uS4 family. Part of the 30S ribosomal subunit. Contacts protein S5. The interaction surface between S4 and S5 is involved in control of translational fidelity.

Functionally, one of the primary rRNA binding proteins, it binds directly to 16S rRNA where it nucleates assembly of the body of the 30S subunit. In terms of biological role, with S5 and S12 plays an important role in translational accuracy. This Chlamydia muridarum (strain MoPn / Nigg) protein is Small ribosomal subunit protein uS4.